We begin with the raw amino-acid sequence, 311 residues long: Phosphoribosylaminoimidazole-succinocarboxamide synthase (311 aa).

Belongs to the SAICAR synthetase family.

The enzyme catalyses 5-amino-1-(5-phospho-D-ribosyl)imidazole-4-carboxylate + L-aspartate + ATP = (2S)-2-[5-amino-1-(5-phospho-beta-D-ribosyl)imidazole-4-carboxamido]succinate + ADP + phosphate + 2 H(+). It functions in the pathway purine metabolism; IMP biosynthesis via de novo pathway; 5-amino-1-(5-phospho-D-ribosyl)imidazole-4-carboxamide from 5-amino-1-(5-phospho-D-ribosyl)imidazole-4-carboxylate: step 1/2. The protein is Phosphoribosylaminoimidazole-succinocarboxamide synthase of Aromatoleum aromaticum (strain DSM 19018 / LMG 30748 / EbN1) (Azoarcus sp. (strain EbN1)).